The chain runs to 146 residues: Hemoglobin subunit beta (146 aa).

Val1 is subject to N-acetylvaline. Residues 2–146 enclose the Globin domain; the sequence is HMTDAEKKLV…VANALAHKYH (145 aa). Thr12 is subject to Phosphothreonine. Lys59 carries the post-translational modification N6-acetyllysine. His63 lines the heme b pocket. N6-acetyllysine is present on Lys82. His92 provides a ligand contact to heme b. Cys93 carries the post-translational modification S-nitrosocysteine. Position 144 is an N6-acetyllysine (Lys144).

The protein belongs to the globin family. Tetramer of two alpha and two different beta chains. Two external cysteine residues at beta-16 and beta-52 cause reversible polymerization to octamers and most likely irreversible formation of higher polymers. In terms of tissue distribution, red blood cells.

Functionally, involved in oxygen transport from the lung to the various peripheral tissues. The polypeptide is Hemoglobin subunit beta (HBB) (Echinops telfairi (Lesser hedgehog tenrec)).